A 308-amino-acid chain; its full sequence is ADP-L-glycero-D-manno-heptose-6-epimerase (308 aa).

Residues Phe10–Ile11, Asp31–Asn32, Lys38, Lys53, Glu75–Ser79, and Asn92 each bind NADP(+). Tyr139 functions as the Proton acceptor in the catalytic mechanism. Residue Lys143 coordinates NADP(+). A substrate-binding site is contributed by Asn168. NADP(+) contacts are provided by Val169 and Lys177. Catalysis depends on Lys177, which acts as the Proton acceptor. Residues Ser179, His186, Phe200–Ser203, Arg208, and Tyr271 each bind substrate.

The protein belongs to the NAD(P)-dependent epimerase/dehydratase family. HldD subfamily. As to quaternary structure, homopentamer. It depends on NADP(+) as a cofactor.

It catalyses the reaction ADP-D-glycero-beta-D-manno-heptose = ADP-L-glycero-beta-D-manno-heptose. It participates in nucleotide-sugar biosynthesis; ADP-L-glycero-beta-D-manno-heptose biosynthesis; ADP-L-glycero-beta-D-manno-heptose from D-glycero-beta-D-manno-heptose 7-phosphate: step 4/4. Its pathway is bacterial outer membrane biogenesis; LOS core biosynthesis. Its function is as follows. Catalyzes the interconversion between ADP-D-glycero-beta-D-manno-heptose and ADP-L-glycero-beta-D-manno-heptose via an epimerization at carbon 6 of the heptose. The protein is ADP-L-glycero-D-manno-heptose-6-epimerase of Haemophilus influenzae (strain ATCC 51907 / DSM 11121 / KW20 / Rd).